The sequence spans 121 residues: Holo-[acyl-carrier-protein] synthase (121 aa).

D5 and E50 together coordinate Mg(2+).

Belongs to the P-Pant transferase superfamily. AcpS family. Mg(2+) is required as a cofactor.

Its subcellular location is the cytoplasm. The catalysed reaction is apo-[ACP] + CoA = holo-[ACP] + adenosine 3',5'-bisphosphate + H(+). Its function is as follows. Transfers the 4'-phosphopantetheine moiety from coenzyme A to a Ser of acyl-carrier-protein. The polypeptide is Holo-[acyl-carrier-protein] synthase (Sulfurimonas denitrificans (strain ATCC 33889 / DSM 1251) (Thiomicrospira denitrificans (strain ATCC 33889 / DSM 1251))).